A 364-amino-acid polypeptide reads, in one-letter code: Aminomethyltransferase (364 aa).

The protein belongs to the GcvT family. In terms of assembly, the glycine cleavage system is composed of four proteins: P, T, L and H.

It carries out the reaction N(6)-[(R)-S(8)-aminomethyldihydrolipoyl]-L-lysyl-[protein] + (6S)-5,6,7,8-tetrahydrofolate = N(6)-[(R)-dihydrolipoyl]-L-lysyl-[protein] + (6R)-5,10-methylene-5,6,7,8-tetrahydrofolate + NH4(+). Functionally, the glycine cleavage system catalyzes the degradation of glycine. The polypeptide is Aminomethyltransferase (Shewanella pealeana (strain ATCC 700345 / ANG-SQ1)).